The primary structure comprises 331 residues: Protein FLX-like 1 (331 aa).

The interval 1 to 51 is disordered; it reads MSGRNRGPPPPSMKGGSYSGLQAPVHQPPFVRGLGGGPVPPPPHPSMIDDS. A coiled-coil region spans residues 69 to 252; that stretch reads ILEDRLAAQN…AEIANSETSA (184 aa). The span at 306 to 321 shows a compositional bias: low complexity; the sequence is QAAWAGGYDPQQQQQQ. The interval 306-331 is disordered; that stretch reads QAAWAGGYDPQQQQQQQPPPQGQGHR. Residues 322-331 show a composition bias toward pro residues; sequence QPPPQGQGHR.

It belongs to the FLX family. In terms of assembly, interacts with FRI.

Functionally, has no transcriptional activation activity. The polypeptide is Protein FLX-like 1 (FLXL1) (Arabidopsis thaliana (Mouse-ear cress)).